The sequence spans 670 residues: Carnitine O-acetyltransferase, mitochondrial (670 aa).

Residue His-378 is the Proton acceptor of the active site. CoA is bound by residues Lys-461 and 465–472 (KRHGMSPD). (R)-carnitine is bound at residue Tyr-494. Ser-498 is a binding site for CoA. (R)-carnitine is bound at residue Thr-507. Gln-597 contacts CoA. Residues 668–670 (AKL) carry the Microbody targeting signal motif.

The protein belongs to the carnitine/choline acetyltransferase family.

The protein resides in the mitochondrion inner membrane. Its subcellular location is the peroxisome. It carries out the reaction (R)-carnitine + acetyl-CoA = O-acetyl-(R)-carnitine + CoA. Functionally, carnitine acetylase is specific for short chain fatty acids. Carnitine acetylase seems to affect the flux through the pyruvate dehydrogenase complex. It may be involved as well in the transport of acetyl-CoA into mitochondria. The sequence is that of Carnitine O-acetyltransferase, mitochondrial (CAT2) from Saccharomyces cerevisiae (strain ATCC 204508 / S288c) (Baker's yeast).